We begin with the raw amino-acid sequence, 951 residues long: Valine--tRNA ligase (951 aa).

The 'HIGH' region signature appears at 42-52 (PNVTGSLHMGH). Residues 554–558 (KMSKS) carry the 'KMSKS' region motif. Lys557 contributes to the ATP binding site. The stretch at 882 to 951 (LIDKDAELAR…EEQKATIAAL (70 aa)) forms a coiled coil.

Belongs to the class-I aminoacyl-tRNA synthetase family. ValS type 1 subfamily. As to quaternary structure, monomer.

Its subcellular location is the cytoplasm. It catalyses the reaction tRNA(Val) + L-valine + ATP = L-valyl-tRNA(Val) + AMP + diphosphate. Its function is as follows. Catalyzes the attachment of valine to tRNA(Val). As ValRS can inadvertently accommodate and process structurally similar amino acids such as threonine, to avoid such errors, it has a 'posttransfer' editing activity that hydrolyzes mischarged Thr-tRNA(Val) in a tRNA-dependent manner. The protein is Valine--tRNA ligase of Vibrio vulnificus (strain CMCP6).